The sequence spans 312 residues: Ribosomal RNA small subunit methyltransferase H (312 aa).

Residues 35 to 37, Asp-55, Phe-80, Asp-102, and Gln-109 each bind S-adenosyl-L-methionine; that span reads GGH.

Belongs to the methyltransferase superfamily. RsmH family.

Its subcellular location is the cytoplasm. The catalysed reaction is cytidine(1402) in 16S rRNA + S-adenosyl-L-methionine = N(4)-methylcytidine(1402) in 16S rRNA + S-adenosyl-L-homocysteine + H(+). Its function is as follows. Specifically methylates the N4 position of cytidine in position 1402 (C1402) of 16S rRNA. In Pseudoalteromonas translucida (strain TAC 125), this protein is Ribosomal RNA small subunit methyltransferase H.